The following is a 402-amino-acid chain: Protein FAM221B (402 aa).

Basic and acidic residues predominate over residues 1-35 (MEAHEIIEEPHITMDAEKHPPSKDPSAEDLQENHI). 2 disordered regions span residues 1–205 (MEAH…TARP) and 378–402 (DTQKTRQRGGRPRGTDTVSNWHRPL). 2 stretches are compositionally biased toward polar residues: residues 77 to 90 (EPSISETPSETPTY) and 393 to 402 (DTVSNWHRPL).

Belongs to the FAM221 family.

The sequence is that of Protein FAM221B (FAM221B) from Homo sapiens (Human).